A 138-amino-acid chain; its full sequence is MPKGAAGAGPRRHIAAGLQVGSYVKVADNSGAKEAMIIGVIGYKGRLRRIPPAAVGDMVVVTVKKGTPEMRKQVVRAIVIRQRRPYRRPDGTWIAFEDNAVVIVSPDGTPKGSEIRGPVAREAAERWPKVANIASIII.

Belongs to the universal ribosomal protein uL14 family. In terms of assembly, part of the 50S ribosomal subunit. Forms a cluster with proteins L3 and L24e, part of which may contact the 16S rRNA in 2 intersubunit bridges.

Functionally, binds to 23S rRNA. Forms part of two intersubunit bridges in the 70S ribosome. This is Large ribosomal subunit protein uL14 from Hyperthermus butylicus (strain DSM 5456 / JCM 9403 / PLM1-5).